Here is a 216-residue protein sequence, read N- to C-terminus: Probable transaldolase (216 aa).

Residue Lys-83 is the Schiff-base intermediate with substrate of the active site.

It belongs to the transaldolase family. Type 3B subfamily.

The protein localises to the cytoplasm. The enzyme catalyses D-sedoheptulose 7-phosphate + D-glyceraldehyde 3-phosphate = D-erythrose 4-phosphate + beta-D-fructose 6-phosphate. It participates in carbohydrate degradation; pentose phosphate pathway; D-glyceraldehyde 3-phosphate and beta-D-fructose 6-phosphate from D-ribose 5-phosphate and D-xylulose 5-phosphate (non-oxidative stage): step 2/3. In terms of biological role, transaldolase is important for the balance of metabolites in the pentose-phosphate pathway. The sequence is that of Probable transaldolase from Sorangium cellulosum (strain So ce56) (Polyangium cellulosum (strain So ce56)).